We begin with the raw amino-acid sequence, 247 residues long: Homeobox-leucine zipper protein HOX15 (247 aa).

Positions 1–44 are disordered; that stretch reads MAQDDEDVGLALGLSLGSGGHRRQRESRDEAPSSAAASLLTLRL. Low complexity predominate over residues 32–44; it reads PSSAAASLLTLRL. Residues 91-150 constitute a DNA-binding region (homeobox); the sequence is NSRKKLRLSKEQSALLEDRFKEHSTLNPKQKVALAKQLNLRPRQVEVWFQNRRARTKLKQ. Residues 149–193 form a leucine-zipper region; sequence KQTEVDCELLKRCCETLTEENRRLHRELQQLRALTHSTAAGFFMA. Residues 221-247 form a disordered region; sequence SPTAAADRTNKPTAPHLFSPFAKSAAC.

The protein belongs to the HD-ZIP homeobox family. Class II subfamily. Expressed in seedlings, stems, leaf blades and panicles.

It localises to the nucleus. In terms of biological role, probable transcription factor. In Oryza sativa subsp. japonica (Rice), this protein is Homeobox-leucine zipper protein HOX15 (HOX15).